A 162-amino-acid chain; its full sequence is Ribosome maturation factor RimP (162 aa).

It belongs to the RimP family.

It is found in the cytoplasm. In terms of biological role, required for maturation of 30S ribosomal subunits. The chain is Ribosome maturation factor RimP from Leptospira biflexa serovar Patoc (strain Patoc 1 / Ames).